The chain runs to 120 residues: NAD(P)H-quinone oxidoreductase subunit 3 (120 aa).

3 helical membrane passes run phenylalanine 2–isoleucine 22, methionine 64–valine 84, and leucine 89–valine 109.

The protein belongs to the complex I subunit 3 family. In terms of assembly, NDH-1 can be composed of about 15 different subunits; different subcomplexes with different compositions have been identified which probably have different functions.

Its subcellular location is the cellular thylakoid membrane. The catalysed reaction is a plastoquinone + NADH + (n+1) H(+)(in) = a plastoquinol + NAD(+) + n H(+)(out). The enzyme catalyses a plastoquinone + NADPH + (n+1) H(+)(in) = a plastoquinol + NADP(+) + n H(+)(out). Its function is as follows. NDH-1 shuttles electrons from an unknown electron donor, via FMN and iron-sulfur (Fe-S) centers, to quinones in the respiratory and/or the photosynthetic chain. The immediate electron acceptor for the enzyme in this species is believed to be plastoquinone. Couples the redox reaction to proton translocation, and thus conserves the redox energy in a proton gradient. Cyanobacterial NDH-1 also plays a role in inorganic carbon-concentration. This is NAD(P)H-quinone oxidoreductase subunit 3 from Picosynechococcus sp. (strain ATCC 27264 / PCC 7002 / PR-6) (Agmenellum quadruplicatum).